The sequence spans 419 residues: MPQLDSGGGGAGRGDDLGAPDELLAFQDEGEEQDDKNRDSPVGPERDLAELKSSLVNESEGAAAGAGVPGPGVRVHGEAEGAPEALGREHTSQRLFPDKLPESLEDGLKAPECTSGMYKETVYSAFNLLMPYPPASGAGQHPQPQPPLHNKPGQPPHGVPQLSPLYEHFSSPHPTPAPADISQKQGVHRPLQTPDLSGFYSLTSGSMGQLPHTVSWPSPPLYPLSPSCGYRQHFPAPTAAPGAPYPRFTHPSLMLGSGVPGHPAAIPHPAIVPSSGKQELQPYDRNLKTQAEPKAEKEAKKPVIKKPLNAFMLYMKEMRAKVIAECTLKESAAINQILGRRWHALSREEQAKYYELARKERQLHMQLYPGWSARDNYGKKKRRSREKHQESTTGGKRNAFGTYPEKAAAPAPFLPMTVL.

Gly residues predominate over residues 1–12 (MPQLDSGGGGAG). Residues 1 to 60 (MPQLDSGGGGAGRGDDLGAPDELLAFQDEGEEQDDKNRDSPVGPERDLAELKSSLVNESE) are CTNNB1-binding. 2 disordered regions span residues 1 to 111 (MPQL…LKAP) and 134 to 200 (PASG…SGFY). 2 stretches are compositionally biased toward basic and acidic residues: residues 35-50 (DKNR…DLAE) and 86-109 (LGRE…DGLK). A compositionally biased stretch (pro residues) spans 143-158 (QPQPPLHNKPGQPPHG). Positions 304-372 (IKKPLNAFML…LHMQLYPGWS (69 aa)) form a DNA-binding region, HMG box. Positions 374 to 406 (RDNYGKKKRRSREKHQESTTGGKRNAFGTYPEK) are disordered. The short motif at 379–385 (KKKRRSR) is the Nuclear localization signal element.

This sequence belongs to the TCF/LEF family. Binds the armadillo repeat of CTNNB1 and forms a stable complex. Binds TLE5, TLE1, TLE2, TLE3 and TLE4. Interacts with MLLT11. Interacts with DAZAP2. In terms of assembly, interacts (via N-terminus) with SOX13; inhibits WNT-mediated transcriptional activity. T-cell specific. Expressed in triple negative 2 subpopulations of T-cells and both the gamma-delta and alpha-beta T-cell lineages. Expressed in Il7 receptor positive innate-like T-cells in the mesenteric lymph nodes and spleen (at protein level).

The protein resides in the nucleus. Transcriptional activator involved in T-cell lymphocyte differentiation. Necessary for the survival of CD4(+) CD8(+) immature thymocytes. Isoforms lacking the N-terminal CTNNB1 binding domain cannot fulfill this role. Binds to the T-lymphocyte-specific enhancer element (5'-WWCAAAG-3') found in the promoter of the CD3E gene. Represses expression of the T-cell receptor gamma gene in alpha-beta T-cell lineages. Inhibits the developmental program of IL17A effector gamma-delta T-cell subsets via regulating the transcription of T-cell lineage effector proteins. Required for the development of natural killer receptor-positive lymphoid tissue inducer T-cells. TLE1, TLE2, TLE3 and TLE4 repress transactivation mediated by TCF7 and CTNNB1. May also act as feedback transcriptional repressor of CTNNB1 and TCF7L2 target genes. This Mus musculus (Mouse) protein is Transcription factor 7.